The chain runs to 144 residues: Large ribosomal subunit protein uL15 (144 aa).

The disordered stretch occupies residues 1–57 (MFLNTLRPGEGSKHAPKRVGRGIGSGLGKTGGRGHKGLKSRSGGSVKPGFEGGQMPL). The span at 21–31 (RGIGSGLGKTG) shows a compositional bias: gly residues.

The protein belongs to the universal ribosomal protein uL15 family. Part of the 50S ribosomal subunit.

Its function is as follows. Binds to the 23S rRNA. The protein is Large ribosomal subunit protein uL15 of Marinomonas sp. (strain MWYL1).